The following is a 387-amino-acid chain: GTPase Obg (387 aa).

Residues 1-159 (MKFVDEAIIR…RSLKLELLLL (159 aa)) enclose the Obg domain. The OBG-type G domain occupies 160–333 (ADVGLLGMPN…LAVKLLDFIA (174 aa)). GTP-binding positions include 166–173 (GMPNAGKS), 191–195 (FTTLV), 213–216 (DIPG), 283–286 (NKAD), and 314–316 (SAY). Residues Ser-173 and Thr-193 each coordinate Mg(2+).

This sequence belongs to the TRAFAC class OBG-HflX-like GTPase superfamily. OBG GTPase family. Monomer. Mg(2+) is required as a cofactor.

It localises to the cytoplasm. Functionally, an essential GTPase which binds GTP, GDP and possibly (p)ppGpp with moderate affinity, with high nucleotide exchange rates and a fairly low GTP hydrolysis rate. Plays a role in control of the cell cycle, stress response, ribosome biogenesis and in those bacteria that undergo differentiation, in morphogenesis control. This chain is GTPase Obg, found in Shewanella halifaxensis (strain HAW-EB4).